Consider the following 119-residue polypeptide: 5-hydroxyisourate hydrolase (119 aa).

Substrate contacts are provided by His8, Arg47, and Tyr116.

The protein belongs to the transthyretin family. 5-hydroxyisourate hydrolase subfamily. As to quaternary structure, homotetramer.

The enzyme catalyses 5-hydroxyisourate + H2O = 5-hydroxy-2-oxo-4-ureido-2,5-dihydro-1H-imidazole-5-carboxylate + H(+). It functions in the pathway purine metabolism; urate degradation; (S)-allantoin from urate: step 2/3. Catalyzes the hydrolysis of 5-hydroxyisourate (HIU) to 2-oxo-4-hydroxy-4-carboxy-5-ureidoimidazoline (OHCU). The chain is 5-hydroxyisourate hydrolase from Halalkalibacterium halodurans (strain ATCC BAA-125 / DSM 18197 / FERM 7344 / JCM 9153 / C-125) (Bacillus halodurans).